The primary structure comprises 208 residues: MASITNLASSLSSLSFSSQVSQRPNTISFPRANSVFALPAKSARRASLSITATVSAPPEEEEIVELKKYVKSRLPGGFAAQKIIGTGRRKCAIARVVLQEGTGKVIINYRDAKEYLQGNPLWLQYVKVPLVTLGYENSYDIFVKAHGGGLSGQAQAITLGVARALLKVSADHRSPLKKEGLLTRDARVVERKKAGLKKARKAPQFSKR.

The transit peptide at 1–52 (MASITNLASSLSSLSFSSQVSQRPNTISFPRANSVFALPAKSARRASLSITA) directs the protein to the chloroplast.

The protein belongs to the universal ribosomal protein uS9 family.

It localises to the plastid. It is found in the chloroplast. Binds directly to 16S ribosomal RNA. The polypeptide is Small ribosomal subunit protein uS9c (RPS9) (Arabidopsis thaliana (Mouse-ear cress)).